The primary structure comprises 300 residues: Movement protein (300 aa).

This sequence belongs to the alfamovirus movement protein family.

The protein resides in the host cell junction. The protein localises to the host plasmodesma. In terms of biological role, transports viral genome to neighboring plant cells directly through plasmosdesmata, without any budding. The movement protein allows efficient cell to cell propagation, by bypassing the host cell wall barrier. Acts by forming a tubular structure at the host plasmodesmata, enlarging it enough to allow free passage of virion capsids. This is Movement protein from Alfalfa mosaic virus (AMV).